We begin with the raw amino-acid sequence, 193 residues long: Acyl carrier protein phosphodiesterase (193 aa).

The protein belongs to the AcpH family.

The catalysed reaction is holo-[ACP] + H2O = apo-[ACP] + (R)-4'-phosphopantetheine + H(+). In terms of biological role, converts holo-ACP to apo-ACP by hydrolytic cleavage of the phosphopantetheine prosthetic group from ACP. This is Acyl carrier protein phosphodiesterase from Klebsiella pneumoniae (strain 342).